Reading from the N-terminus, the 153-residue chain is Guanyl-specific ribonuclease N1 (153 aa).

Positions 1 to 20 (MVQLLSAFVSLLSVVAVSGA) are cleaved as a signal peptide. Residues 21–49 (AIPAPAPEAVVDVAPETATIEPTGNFTAQ) constitute a propeptide that is removed on maturation. 2 disulfides stabilise this stretch: cysteine 51-cysteine 59 and cysteine 55-cysteine 152. Histidine 89 is a catalytic residue. The Proton acceptor role is filled by glutamate 107. Residue histidine 141 is the Proton donor of the active site.

Belongs to the ribonuclease N1/T1 family.

The catalysed reaction is [RNA] containing guanosine + H2O = an [RNA fragment]-3'-guanosine-3'-phosphate + a 5'-hydroxy-ribonucleotide-3'-[RNA fragment].. This chain is Guanyl-specific ribonuclease N1 (grn), found in Neurospora crassa (strain ATCC 24698 / 74-OR23-1A / CBS 708.71 / DSM 1257 / FGSC 987).